The chain runs to 101 residues: uncharacterized protein (101 aa).

2 helical membrane-spanning segments follow: residues Val-52 to Leu-72 and Leu-75 to Gly-95.

Its subcellular location is the endoplasmic reticulum membrane. This is an uncharacterized protein from Schizosaccharomyces pombe (strain 972 / ATCC 24843) (Fission yeast).